We begin with the raw amino-acid sequence, 396 residues long: 1-deoxy-D-xylulose 5-phosphate reductoisomerase (396 aa).

NADPH is bound by residues T13, G14, S15, I16, and N127. A 1-deoxy-D-xylulose 5-phosphate-binding site is contributed by K128. Position 129 (E129) interacts with NADPH. D153 contacts Mn(2+). 1-deoxy-D-xylulose 5-phosphate-binding residues include S154, E155, S184, and H207. Residue E155 coordinates Mn(2+). G213 lines the NADPH pocket. The 1-deoxy-D-xylulose 5-phosphate site is built by S220, N225, K226, and E229. A Mn(2+)-binding site is contributed by E229.

The protein belongs to the DXR family. Mg(2+) is required as a cofactor. Requires Mn(2+) as cofactor.

The enzyme catalyses 2-C-methyl-D-erythritol 4-phosphate + NADP(+) = 1-deoxy-D-xylulose 5-phosphate + NADPH + H(+). It functions in the pathway isoprenoid biosynthesis; isopentenyl diphosphate biosynthesis via DXP pathway; isopentenyl diphosphate from 1-deoxy-D-xylulose 5-phosphate: step 1/6. Catalyzes the NADPH-dependent rearrangement and reduction of 1-deoxy-D-xylulose-5-phosphate (DXP) to 2-C-methyl-D-erythritol 4-phosphate (MEP). The chain is 1-deoxy-D-xylulose 5-phosphate reductoisomerase from Pseudomonas syringae pv. tomato (strain ATCC BAA-871 / DC3000).